A 154-amino-acid chain; its full sequence is 6,7-dimethyl-8-ribityllumazine synthase (154 aa).

Residues Phe-26, 60–62 (ALE), and 84–86 (CII) each bind 5-amino-6-(D-ribitylamino)uracil. 89-90 (ET) lines the (2S)-2-hydroxy-3-oxobutyl phosphate pocket. The active-site Proton donor is the His-92. 5-amino-6-(D-ribitylamino)uracil is bound at residue Asn-117. Arg-131 serves as a coordination point for (2S)-2-hydroxy-3-oxobutyl phosphate.

It belongs to the DMRL synthase family.

The enzyme catalyses (2S)-2-hydroxy-3-oxobutyl phosphate + 5-amino-6-(D-ribitylamino)uracil = 6,7-dimethyl-8-(1-D-ribityl)lumazine + phosphate + 2 H2O + H(+). Its pathway is cofactor biosynthesis; riboflavin biosynthesis; riboflavin from 2-hydroxy-3-oxobutyl phosphate and 5-amino-6-(D-ribitylamino)uracil: step 1/2. Its function is as follows. Catalyzes the formation of 6,7-dimethyl-8-ribityllumazine by condensation of 5-amino-6-(D-ribitylamino)uracil with 3,4-dihydroxy-2-butanone 4-phosphate. This is the penultimate step in the biosynthesis of riboflavin. The sequence is that of 6,7-dimethyl-8-ribityllumazine synthase from Acidovorax ebreus (strain TPSY) (Diaphorobacter sp. (strain TPSY)).